The chain runs to 235 residues: Transcription factor MYB59 (235 aa).

2 HTH myb-type domains span residues 5–57 and 58–112; these read QEEY…VNYL and HPGL…RKKA. Residues 33 to 57 constitute a DNA-binding region (H-T-H motif); that stretch reads WDFVAKVSGLNRTGKSCRLRWVNYL. Positions 62–65 match the Bipartite nuclear localization signal 1 motif; the sequence is KRGK. The H-T-H motif DNA-binding region spans 85–108; that stretch reads WSKIARKLPGRTDNEIKNYWRTHM. The Bipartite nuclear localization signal 2 motif lies at 109 to 117; that stretch reads RKKAQEKKR. A disordered region spans residues 109-147; the sequence is RKKAQEKKRPMSPTSSSSNCCSSSMTTTTSQDTGGSNGK. Residues 119 to 138 show a composition bias toward low complexity; sequence MSPTSSSSNCCSSSMTTTTS.

As to expression, mainly expressed in leaves and seedlings, and to a lower extent, in roots, stems and inflorescences. Isoform MYB59-1 and isoform MYB59-2 are present in roots, leaves, and seedlings, while the expression of isoform MYB59-3 and isoform MYB59-4 is confined to seedlings.

It is found in the nucleus. Functionally, transcription factor. The polypeptide is Transcription factor MYB59 (MYB59) (Arabidopsis thaliana (Mouse-ear cress)).